The primary structure comprises 219 residues: Urease subunit gamma/beta (219 aa).

The segment at 1-101 (MFLTPREQEK…LVTVRNPIKS (101 aa)) is urease gamma. The tract at residues 102-219 (SKKTLNTYII…IKRAKERGFA (118 aa)) is urease beta.

It in the N-terminal section; belongs to the urease gamma subunit family. The protein in the C-terminal section; belongs to the urease beta subunit family. Heterohexamer of 3 UreC (alpha) and 3 UreAB (gamma/beta) subunits.

Its subcellular location is the cytoplasm. The catalysed reaction is urea + 2 H2O + H(+) = hydrogencarbonate + 2 NH4(+). Its pathway is nitrogen metabolism; urea degradation; CO(2) and NH(3) from urea (urease route): step 1/1. This Sulfurisphaera tokodaii (strain DSM 16993 / JCM 10545 / NBRC 100140 / 7) (Sulfolobus tokodaii) protein is Urease subunit gamma/beta.